Consider the following 295-residue polypeptide: Probable intramembrane protease C25B8.17 (295 aa).

The chain crosses the membrane as a helical span at residues 1 to 21 (MEGVILASSALFTVYIGAKWS). Residues 22-35 (AQEEEPEEKQLINK) lie on the Cytoplasmic side of the membrane. Residues 36-56 (RLAVLFPIFGGVTLVLMYLAL) form a helical membrane-spanning segment. Residues 57 to 63 (RYLSKEY) lie on the Lumenal side of the membrane. A helical membrane pass occupies residues 64 to 84 (IQLILQGYASLASIICFVRSF). The Cytoplasmic segment spans residues 85-89 (NPKTT). Residues 90–106 (FGKITATMSSIAIALFY) form a helical membrane-spanning segment. The Lumenal segment spans residues 107–111 (FKTKH). The chain crosses the membrane as a helical span at residues 112–130 (WMASNILAWALAANSISIM). Residues 131-139 (RIDSYNTGA) lie on the Cytoplasmic side of the membrane. The chain crosses the membrane as a helical span at residues 140-160 (LLLGALFFYDIYFVFGTEVMV). The active site involves aspartate 149. At 161–183 (TVATGIDIPAKYVLPQFKNPTRL) the chain is on the lumenal side. The chain crosses the membrane as a helical span at residues 184–204 (SMLGLGDIVMPGLMLALMYRF). Aspartate 190 is a catalytic residue. Residues 205–221 (DLHYYINSTSQPKKHST) are Cytoplasmic-facing. Residues 222–244 (YFRNTFIAYGLGLGVTNFALYYF) form a helical membrane-spanning segment. The Lumenal portion of the chain corresponds to 245-249 (KAAQP). The PAL motif lies at 249-251 (PAL). Residues 250–268 (ALLYLSPACIVAPLLTAWY) form a helical membrane-spanning segment. Over 269–295 (RDELKTLFSFRSETEDETDEQDKCKST) the chain is Cytoplasmic.

Belongs to the peptidase A22B family.

It localises to the endoplasmic reticulum membrane. The protein resides in the golgi apparatus membrane. The polypeptide is Probable intramembrane protease C25B8.17 (Schizosaccharomyces pombe (strain 972 / ATCC 24843) (Fission yeast)).